Reading from the N-terminus, the 344-residue chain is L-rhamnose-proton symporter (344 aa).

The next 10 membrane-spanning stretches (helical) occupy residues 4 to 24 (AIIL…CFYA), 38 to 58 (WSIG…YLLL), 68 to 88 (FSIA…IGNI), 101 to 121 (MGIG…TPIL), 137 to 157 (TLLG…AGLL), 175 to 195 (LILA…MDAA), 207 to 227 (INSL…GAII), 259 to 279 (ILFS…YAWG), 290 to 310 (MSWM…GLLL), and 321 to 341 (VAVL…VGLG).

This sequence belongs to the L-rhamnose transporter (TC 2.A.7.6) family.

The protein localises to the cell inner membrane. The enzyme catalyses L-rhamnopyranose(in) + H(+)(in) = L-rhamnopyranose(out) + H(+)(out). In terms of biological role, uptake of L-rhamnose across the cytoplasmic membrane with the concomitant transport of protons into the cell (symport system). In Yersinia pseudotuberculosis serotype O:1b (strain IP 31758), this protein is L-rhamnose-proton symporter.